Reading from the N-terminus, the 615-residue chain is Proteasome-associated ATPase (615 aa).

Residues 1–13 (MSESQRHEAREDG) are compositionally biased toward basic and acidic residues. Positions 1-32 (MSESQRHEAREDGFTTPHESGLSSEDAAELEE) are disordered. A coiled-coil region spans residues 22–100 (LSSEDAAELE…LREEVDRLGQ (79 aa)). 302–307 (GCGKTL) is an ATP binding site. The tract at residues 614-615 (YL) is docks into pockets in the proteasome alpha-ring.

This sequence belongs to the AAA ATPase family. In terms of assembly, homohexamer. Assembles into a hexameric ring structure that caps the 20S proteasome core. Strongly interacts with the prokaryotic ubiquitin-like protein Pup through a hydrophobic interface; the interacting region of ARC lies in its N-terminal coiled-coil domain. There is one Pup binding site per ARC hexamer ring. Upon ATP-binding, the C-terminus of ARC interacts with the alpha-rings of the proteasome core, possibly by binding to the intersubunit pockets.

The protein operates within protein degradation; proteasomal Pup-dependent pathway. Functionally, ATPase which is responsible for recognizing, binding, unfolding and translocation of pupylated proteins into the bacterial 20S proteasome core particle. May be essential for opening the gate of the 20S proteasome via an interaction with its C-terminus, thereby allowing substrate entry and access to the site of proteolysis. Thus, the C-termini of the proteasomal ATPase may function like a 'key in a lock' to induce gate opening and therefore regulate proteolysis. This Mycobacterium sp. (strain JLS) protein is Proteasome-associated ATPase.